Consider the following 631-residue polypeptide: Phosphomethylpyrimidine synthase (631 aa).

Residues asparagine 239, methionine 268, tyrosine 297, histidine 333, 353-355 (SRG), 394-397 (DGLR), and glutamate 433 contribute to the substrate site. Histidine 437 provides a ligand contact to Zn(2+). Tyrosine 460 lines the substrate pocket. Histidine 501 provides a ligand contact to Zn(2+). 3 residues coordinate [4Fe-4S] cluster: cysteine 581, cysteine 584, and cysteine 589.

This sequence belongs to the ThiC family. In terms of assembly, homodimer. Requires [4Fe-4S] cluster as cofactor.

The catalysed reaction is 5-amino-1-(5-phospho-beta-D-ribosyl)imidazole + S-adenosyl-L-methionine = 4-amino-2-methyl-5-(phosphooxymethyl)pyrimidine + CO + 5'-deoxyadenosine + formate + L-methionine + 3 H(+). Its pathway is cofactor biosynthesis; thiamine diphosphate biosynthesis. Catalyzes the synthesis of the hydroxymethylpyrimidine phosphate (HMP-P) moiety of thiamine from aminoimidazole ribotide (AIR) in a radical S-adenosyl-L-methionine (SAM)-dependent reaction. This is Phosphomethylpyrimidine synthase from Salmonella enteritidis PT4 (strain P125109).